A 73-amino-acid polypeptide reads, in one-letter code: MKADIHPVYEAITATCSCGNVIETRSTLAKPLSLDVCNECHPFYTGKQKTLDVGGRVDKFKSRFGAFGATKKA.

4 residues coordinate Zn(2+): Cys16, Cys18, Cys37, and Cys40.

It belongs to the bacterial ribosomal protein bL31 family. Type A subfamily. Part of the 50S ribosomal subunit. It depends on Zn(2+) as a cofactor.

In terms of biological role, binds the 23S rRNA. The sequence is that of Large ribosomal subunit protein bL31 from Pseudomonas fluorescens (strain ATCC BAA-477 / NRRL B-23932 / Pf-5).